A 259-amino-acid polypeptide reads, in one-letter code: Virion protein US10 homolog (259 aa).

A zinc finger spans residues 162–174; the sequence is CAHWCCLGHAFGC.

It belongs to the herpesviridae US10 family. Phosphorylated.

It is found in the virion tegument. Its subcellular location is the host nucleus matrix. This chain is Virion protein US10 homolog, found in Equine herpesvirus 4 (strain 1942) (EHV-4).